The primary structure comprises 119 residues: Early E3 13.3 kDa protein (119 aa).

This is Early E3 13.3 kDa protein from Canine adenovirus serotype 1 (strain Utrecht) (CAdV-1).